Reading from the N-terminus, the 253-residue chain is NAD-dependent protein deacylase 2 (253 aa).

In terms of domain architecture, Deacetylase sirtuin-type spans 1–252 (MEDEIRKAAE…VEEVKRLRSE (252 aa)). NAD(+) is bound by residues 23 to 42 (GAGISAESGIPTFRGEDGLW) and 100 to 103 (QNID). The Proton acceptor role is filled by histidine 118. 4 residues coordinate Zn(2+): cysteine 126, cysteine 129, cysteine 150, and cysteine 153. Residues 191–193 (GSS), 217–219 (NAE), and alanine 235 each bind NAD(+).

Belongs to the sirtuin family. Class III subfamily. The cofactor is Zn(2+).

The protein localises to the cytoplasm. It catalyses the reaction N(6)-acetyl-L-lysyl-[protein] + NAD(+) + H2O = 2''-O-acetyl-ADP-D-ribose + nicotinamide + L-lysyl-[protein]. In terms of biological role, NAD-dependent protein deacetylase which modulates the activities of several proteins which are inactive in their acetylated form. Deacetylates the N-terminal lysine residue of Alba, the major archaeal chromatin protein and that, in turn, increases Alba's DNA binding affinity, thereby repressing transcription. The sequence is that of NAD-dependent protein deacylase 2 from Archaeoglobus fulgidus (strain ATCC 49558 / DSM 4304 / JCM 9628 / NBRC 100126 / VC-16).